Reading from the N-terminus, the 351-residue chain is Translation initiation factor eIF2B subunit beta (351 aa).

It belongs to the eIF-2B alpha/beta/delta subunits family. In terms of assembly, component of the translation initiation factor 2B (eIF2B) complex which is a heterodecamer of two sets of five different subunits: alpha, beta, gamma, delta and epsilon. Subunits alpha, beta and delta comprise a regulatory subcomplex and subunits epsilon and gamma comprise a catalytic subcomplex. Within the complex, the hexameric regulatory complex resides at the center, with the two heterodimeric catalytic subcomplexes bound on opposite sides.

It is found in the cytoplasm. The protein localises to the cytosol. With respect to regulation, activated by the chemical integrated stress response (ISR) inhibitor ISRIB which stimulates guanine nucleotide exchange factor activity for both phosphorylated and unphosphorylated eIF2. Acts as a component of the translation initiation factor 2B (eIF2B) complex, which catalyzes the exchange of GDP for GTP on eukaryotic initiation factor 2 (eIF2) gamma subunit. Its guanine nucleotide exchange factor activity is repressed when bound to eIF2 complex phosphorylated on the alpha subunit, thereby limiting the amount of methionyl-initiator methionine tRNA available to the ribosome and consequently global translation is repressed. The sequence is that of Translation initiation factor eIF2B subunit beta (EIF2B2) from Homo sapiens (Human).